Reading from the N-terminus, the 342-residue chain is MDLSETALAEAVGAARQAFARAGDLDALARLKTEHLGDRAPLALARQALGGVPKDQRADAGKRVNAARAQAQQAYDERLAELRAERDAAVLVAERIDVTLPSTRQPVGARHPITILAEHIADTFIAMGWELAEGPEVEAEQFNFDALNFPADHPARSEQDTFYIAPEGSRQLLRTHTSPVQVRTLLARELPVYVISIGRTFRTDELDATHTPVFHQVEGLAVDRGLSMAHLRGTLDAFARAEFGPQARTRIRPHFFPFTEPSAEVDVWFVGKKGGAGWVEWGGCGMVHPNVLRAAGIDPDVYSGFAFGMGLERTLQFRNGIPDMRDMVEGDMRFSLPFGVGA.

Glu-260 contributes to the Mg(2+) binding site.

Belongs to the class-II aminoacyl-tRNA synthetase family. Phe-tRNA synthetase alpha subunit type 1 subfamily. Tetramer of two alpha and two beta subunits. Mg(2+) is required as a cofactor.

The protein localises to the cytoplasm. It carries out the reaction tRNA(Phe) + L-phenylalanine + ATP = L-phenylalanyl-tRNA(Phe) + AMP + diphosphate + H(+). The protein is Phenylalanine--tRNA ligase alpha subunit of Mycobacterium avium (strain 104).